Here is a 436-residue protein sequence, read N- to C-terminus: Glutamate-1-semialdehyde 2,1-aminomutase (436 aa).

Position 274 is an N6-(pyridoxal phosphate)lysine (lysine 274).

It belongs to the class-III pyridoxal-phosphate-dependent aminotransferase family. HemL subfamily. As to quaternary structure, homodimer. Pyridoxal 5'-phosphate serves as cofactor.

The protein resides in the cytoplasm. It catalyses the reaction (S)-4-amino-5-oxopentanoate = 5-aminolevulinate. It participates in porphyrin-containing compound metabolism; protoporphyrin-IX biosynthesis; 5-aminolevulinate from L-glutamyl-tRNA(Glu): step 2/2. This Albidiferax ferrireducens (strain ATCC BAA-621 / DSM 15236 / T118) (Rhodoferax ferrireducens) protein is Glutamate-1-semialdehyde 2,1-aminomutase.